The following is a 617-amino-acid chain: Dihydroxy-acid dehydratase (617 aa).

A Mg(2+)-binding site is contributed by D81. C122 is a [2Fe-2S] cluster binding site. D123 and K124 together coordinate Mg(2+). K124 is subject to N6-carboxylysine. C195 serves as a coordination point for [2Fe-2S] cluster. Residue E491 participates in Mg(2+) binding. The active-site Proton acceptor is S517.

This sequence belongs to the IlvD/Edd family. In terms of assembly, homodimer. It depends on [2Fe-2S] cluster as a cofactor. Mg(2+) serves as cofactor.

The catalysed reaction is (2R)-2,3-dihydroxy-3-methylbutanoate = 3-methyl-2-oxobutanoate + H2O. It carries out the reaction (2R,3R)-2,3-dihydroxy-3-methylpentanoate = (S)-3-methyl-2-oxopentanoate + H2O. The protein operates within amino-acid biosynthesis; L-isoleucine biosynthesis; L-isoleucine from 2-oxobutanoate: step 3/4. Its pathway is amino-acid biosynthesis; L-valine biosynthesis; L-valine from pyruvate: step 3/4. Functions in the biosynthesis of branched-chain amino acids. Catalyzes the dehydration of (2R,3R)-2,3-dihydroxy-3-methylpentanoate (2,3-dihydroxy-3-methylvalerate) into 2-oxo-3-methylpentanoate (2-oxo-3-methylvalerate) and of (2R)-2,3-dihydroxy-3-methylbutanoate (2,3-dihydroxyisovalerate) into 2-oxo-3-methylbutanoate (2-oxoisovalerate), the penultimate precursor to L-isoleucine and L-valine, respectively. The polypeptide is Dihydroxy-acid dehydratase (Buchnera aphidicola subsp. Schizaphis graminum (strain Sg)).